Reading from the N-terminus, the 198-residue chain is Ribonuclease HII (198 aa).

The region spanning 5-195 is the RNase H type-2 domain; it reads LRVAGVDEAG…VKAWLASHQG (191 aa). 3 residues coordinate a divalent metal cation: Asp11, Glu12, and Asp103.

The protein belongs to the RNase HII family. It depends on Mn(2+) as a cofactor. The cofactor is Mg(2+).

Its subcellular location is the cytoplasm. The catalysed reaction is Endonucleolytic cleavage to 5'-phosphomonoester.. Its function is as follows. Endonuclease that specifically degrades the RNA of RNA-DNA hybrids. This Chromobacterium violaceum (strain ATCC 12472 / DSM 30191 / JCM 1249 / CCUG 213 / NBRC 12614 / NCIMB 9131 / NCTC 9757 / MK) protein is Ribonuclease HII.